A 507-amino-acid chain; its full sequence is Ribose import ATP-binding protein RbsA 2 (507 aa).

ABC transporter domains lie at 7-245 (FSLD…VGRN) and 249-498 (LFTR…MPQS). Position 39–46 (39–46 (GENGAGKS)) interacts with ATP.

The protein belongs to the ABC transporter superfamily. Ribose importer (TC 3.A.1.2.1) family. In terms of assembly, the complex is composed of an ATP-binding protein (RbsA), two transmembrane proteins (RbsC) and a solute-binding protein (RbsB).

The protein resides in the cell inner membrane. The catalysed reaction is D-ribose(out) + ATP + H2O = D-ribose(in) + ADP + phosphate + H(+). In terms of biological role, part of the ABC transporter complex RbsABC involved in ribose import. Responsible for energy coupling to the transport system. In Mesorhizobium japonicum (strain LMG 29417 / CECT 9101 / MAFF 303099) (Mesorhizobium loti (strain MAFF 303099)), this protein is Ribose import ATP-binding protein RbsA 2.